Reading from the N-terminus, the 326-residue chain is Mitochondrial glycine transporter (326 aa).

Solcar repeat units follow at residues 22-106, 135-216, and 228-312; these read SKTT…LRTS, SANL…LKRY, and SSSS…LILR. Transmembrane regions (helical) follow at residues 28-53, 81-107, 138-163, 191-214, 232-258, and 287-305; these read FGAG…TRVQ, GTLP…RTSL, LATG…VRYE, GFGA…EQLK, INFV…KTRL, and GLGL…AWTV.

This sequence belongs to the mitochondrial carrier (TC 2.A.29) family. SLC25A38 subfamily.

It is found in the mitochondrion inner membrane. The catalysed reaction is glycine(in) = glycine(out). In terms of biological role, mitochondrial glycine transporter that imports glycine into the mitochondrial matrix. Plays an important role in providing glycine for the first enzymatic step in heme biosynthesis, the condensation of glycine with succinyl-CoA to produce 5-aminolevulinate (ALA) in the mitochondrial matrix. The polypeptide is Mitochondrial glycine transporter (Emericella nidulans (strain FGSC A4 / ATCC 38163 / CBS 112.46 / NRRL 194 / M139) (Aspergillus nidulans)).